Here is a 262-residue protein sequence, read N- to C-terminus: UPF0739 protein C1orf74 homolog (262 aa).

Belongs to the UPF0739 family.

The sequence is that of UPF0739 protein C1orf74 homolog from Xenopus laevis (African clawed frog).